Consider the following 271-residue polypeptide: Glutamate racemase (271 aa).

Substrate is bound by residues 10-11 (DS) and 42-43 (YG). C73 serves as the catalytic Proton donor/acceptor. 74–75 (NT) lines the substrate pocket. C183 acts as the Proton donor/acceptor in catalysis. 184-185 (TH) is a substrate binding site.

This sequence belongs to the aspartate/glutamate racemases family.

It carries out the reaction L-glutamate = D-glutamate. It participates in cell wall biogenesis; peptidoglycan biosynthesis. In terms of biological role, provides the (R)-glutamate required for cell wall biosynthesis. The sequence is that of Glutamate racemase from Lactococcus lactis subsp. cremoris (strain MG1363).